Here is an 85-residue protein sequence, read N- to C-terminus: Small ribosomal subunit protein uS17 (85 aa).

It belongs to the universal ribosomal protein uS17 family. In terms of assembly, part of the 30S ribosomal subunit.

Functionally, one of the primary rRNA binding proteins, it binds specifically to the 5'-end of 16S ribosomal RNA. The protein is Small ribosomal subunit protein uS17 of Mycoplasma pneumoniae (strain ATCC 29342 / M129 / Subtype 1) (Mycoplasmoides pneumoniae).